A 437-amino-acid polypeptide reads, in one-letter code: CMP-5'-(3-aminopropyl)phosphonate hydroxylase (437 aa).

FAD is required as a cofactor.

The catalysed reaction is CMP-5'-(3-aminopropyl)phosphonate + NADPH + O2 = CMP-5'-(N-hydroxy-3-aminopropyl)phosphonate + NADP(+) + H2O. It participates in antibiotic biosynthesis. In terms of biological role, hydroxylase involved in the biosynthesis of the phosphonate antibiotic FR-900098, a potent antimalarial agent that acts as an inhibitor of 1-deoxy-D-xylulose 5-phosphate reductoisomerase (DXR), the first enzyme in the nonmevalonate pathway for isoprenoid biosynthesis. Catalyzes the N-hydroxylation of CMP-5'-3-aminopropylphosphonate (CMP-5'-3APn) to CMP-5'-(N-hydroxy-3-aminopropyl)phosphonate (CMP-5'-H3APn). Cannot use CMP-5'-N-acetyl-3-aminopropylphosphonate (CMP-5'-Ac3APn) as a substrate. The chain is CMP-5'-(3-aminopropyl)phosphonate hydroxylase from Streptomyces rubellomurinus (strain ATCC 31215).